We begin with the raw amino-acid sequence, 954 residues long: Kinesin-like protein KIN-14A (954 aa).

Residues 24 to 142 (ALRRHQAATW…CVISLKSYHE (119 aa)) form the Calponin-homology (CH) domain. Residues 242–293 (LSRQLEKEQSSNSQVENRRRLLQAQESELLELKSMFQEVKIDFRTLKTQFQD) adopt a coiled-coil conformation. The Kinesin motor domain maps to 332–651 (NIRVFCRIRP…LKFAQRASCV (320 aa)). 413-420 (GQTGSGKT) provides a ligand contact to ATP. Residues 656-692 (AHANKESNEIRELKEQVENLKRALAAKELEKSSFKLK) adopt a coiled-coil conformation. Positions 697 to 709 (VRERAKQVPERTP) are enriched in basic and acidic residues. Disordered regions lie at residues 697-743 (VRER…TKLN), 824-858 (NLEVGQTDEPSSSAKLEKMTSSNATKKGSHLRKSI), and 882-954 (PAKI…KRWL). 2 stretches are compositionally biased toward polar residues: residues 831–849 (DEPSSSAKLEKMTSSNATK) and 886–898 (ANSTNNDVPSSIT).

Belongs to the TRAFAC class myosin-kinesin ATPase superfamily. Kinesin family. KIN-14 subfamily.

In Oryza sativa subsp. japonica (Rice), this protein is Kinesin-like protein KIN-14A.